Here is a 373-residue protein sequence, read N- to C-terminus: Dual-specificity RNA methyltransferase RlmN (373 aa).

Residue E94 is the Proton acceptor of the active site. One can recognise a Radical SAM core domain in the interval 100–339 (EDDRATLCVS…VIVRKTRGDD (240 aa)). Residues C107 and C344 are joined by a disulfide bond. Residues C114, C118, and C121 each contribute to the [4Fe-4S] cluster site. Residues 168-169 (GE), S200, 222-224 (SIH), and N301 contribute to the S-adenosyl-L-methionine site. C344 functions as the S-methylcysteine intermediate in the catalytic mechanism.

Belongs to the radical SAM superfamily. RlmN family. [4Fe-4S] cluster is required as a cofactor.

It is found in the cytoplasm. It carries out the reaction adenosine(2503) in 23S rRNA + 2 reduced [2Fe-2S]-[ferredoxin] + 2 S-adenosyl-L-methionine = 2-methyladenosine(2503) in 23S rRNA + 5'-deoxyadenosine + L-methionine + 2 oxidized [2Fe-2S]-[ferredoxin] + S-adenosyl-L-homocysteine. The catalysed reaction is adenosine(37) in tRNA + 2 reduced [2Fe-2S]-[ferredoxin] + 2 S-adenosyl-L-methionine = 2-methyladenosine(37) in tRNA + 5'-deoxyadenosine + L-methionine + 2 oxidized [2Fe-2S]-[ferredoxin] + S-adenosyl-L-homocysteine. Its function is as follows. Specifically methylates position 2 of adenine 2503 in 23S rRNA and position 2 of adenine 37 in tRNAs. m2A2503 modification seems to play a crucial role in the proofreading step occurring at the peptidyl transferase center and thus would serve to optimize ribosomal fidelity. This is Dual-specificity RNA methyltransferase RlmN from Shewanella pealeana (strain ATCC 700345 / ANG-SQ1).